The following is a 570-amino-acid chain: Urease subunit alpha (570 aa).

Positions 135 to 570 constitute a Urease domain; the sequence is GGLDIHIHFN…ELPLAKRYSL (436 aa). 3 residues coordinate Ni(2+): H140, H142, and K219. K219 is modified (N6-carboxylysine). H221 contacts substrate. Ni(2+)-binding residues include H248 and H274. Catalysis depends on H322, which acts as the Proton donor. D362 is a Ni(2+) binding site.

The protein belongs to the metallo-dependent hydrolases superfamily. Urease alpha subunit family. Heterotrimer of UreA (gamma), UreB (beta) and UreC (alpha) subunits. Three heterotrimers associate to form the active enzyme. Requires Ni cation as cofactor. Post-translationally, carboxylation allows a single lysine to coordinate two nickel ions.

The protein resides in the cytoplasm. It carries out the reaction urea + 2 H2O + H(+) = hydrogencarbonate + 2 NH4(+). The protein operates within nitrogen metabolism; urea degradation; CO(2) and NH(3) from urea (urease route): step 1/1. This is Urease subunit alpha from Haloquadratum walsbyi (strain DSM 16790 / HBSQ001).